Reading from the N-terminus, the 315-residue chain is Ribosomal RNA small subunit methyltransferase H (315 aa).

S-adenosyl-L-methionine-binding positions include 37–39, Asp57, Phe83, Asp105, and Gln112; that span reads GGH.

This sequence belongs to the methyltransferase superfamily. RsmH family.

The protein resides in the cytoplasm. It catalyses the reaction cytidine(1402) in 16S rRNA + S-adenosyl-L-methionine = N(4)-methylcytidine(1402) in 16S rRNA + S-adenosyl-L-homocysteine + H(+). In terms of biological role, specifically methylates the N4 position of cytidine in position 1402 (C1402) of 16S rRNA. The sequence is that of Ribosomal RNA small subunit methyltransferase H from Pseudomonas putida (strain W619).